The sequence spans 125 residues: Succinate dehydrogenase assembly factor 3, mitochondrial (125 aa).

The transit peptide at 1-30 (MPGRHVSRVRALYKRVLQLHRVLPPDLKSL) directs the protein to the mitochondrion.

It belongs to the complex I LYR family. SDHAF3 subfamily. As to quaternary structure, interacts with SDHB within an SDHA-SDHB subcomplex.

The protein localises to the mitochondrion matrix. Functionally, plays an essential role in the assembly of succinate dehydrogenase (SDH), an enzyme complex (also referred to as respiratory complex II) that is a component of both the tricarboxylic acid (TCA) cycle and the mitochondrial electron transport chain, and which couples the oxidation of succinate to fumarate with the reduction of ubiquinone (coenzyme Q) to ubiquinol. Promotes maturation of the iron-sulfur protein subunit SDHB of the SDH catalytic dimer, protecting it from the deleterious effects of oxidants. May act together with SDHAF1. This Homo sapiens (Human) protein is Succinate dehydrogenase assembly factor 3, mitochondrial.